Consider the following 373-residue polypeptide: MEAFAVAIQSVINDSGFLAFTTGNAIMILVGLILLYLAFAREFEPLLLGPIAFGCLLANIPRNGFEEGVMALISAGISQEIFPPLIFLGVGAMTDFGPLIANPKTLLLGAAAQIGVFAALGGAMMLGFTAQEAAAIGIIGGADGPTSIYLATKLAPHLLGAIAVAAYSYMSLVPLIQPPVMKLFTTQKEREIVMEQLREVTRFEKIVFPIVATIFISLLLPSITSLLGMLMLGNLFRESGVTDRLSDTSQNALINTVTIFLATGTGLTMSAEHFLSLETIKIILLGLFAFICGTAGGVLFGKLMSLVDGGKTNPLIGSAGVSAVPMAARVSQVVGAKANPANFLLMHAMGPNVAGVIGTAVAAGTMLAMLSNH.

Helical transmembrane passes span 17-37 (FLAF…LLYL), 38-58 (AFAR…CLLA), 81-101 (IFPP…PLIA), 106-126 (LLLG…AMML), 132-152 (EAAA…YLAT), 156-176 (PHLL…VPLI), 206-226 (IVFP…ITSL), 257-277 (VTIF…FLSL), 280-300 (IKII…GVLF), and 343-363 (FLLM…AVAA).

This sequence belongs to the GcdB/MmdB/OadB family. In terms of assembly, the methylmalonyl-CoA decarboxylase is composed of five subunits: the carboxyltransferase alpha subunit (MmdA), the tunnel beta subunit (MmdB), the biotin-containing gamma subunit (MmdC), and the delta (MmdD) and epsilon (MmdE) subunits. Post-translationally, the N-terminus is blocked.

The protein localises to the cell membrane. The catalysed reaction is (S)-methylmalonyl-CoA + Na(+)(in) + H(+)(out) = propanoyl-CoA + Na(+)(out) + CO2. Completely inhibited by avidin. In terms of biological role, tunnel subunit of the sodium ion pump methylmalonyl-CoA decarboxylase, which converts the chemical energy of a decarboxylation reaction into an electrochemical gradient of Na(+) ions across the cytoplasmic membrane, thereby creating a sodium ion motive force that is used for ATP synthesis. The beta subunit catalyzes the decarboxylation of the carboxybiotin carrier protein and the coupled export of Na(+) ions. Can also convert malonyl-CoA into acetyl-CoA. In Veillonella parvula (Staphylococcus parvulus), this protein is Methylmalonyl-CoA decarboxylase subunit beta.